The following is a 155-amino-acid chain: Cytochrome c-type biogenesis protein CcmE (155 aa).

The Cytoplasmic portion of the chain corresponds to 1 to 8 (MNPLRKKR). A helical; Signal-anchor for type II membrane protein membrane pass occupies residues 9–29 (LLIIVALLAGVGLAVTLALSA). The Periplasmic portion of the chain corresponds to 30–155 (LQENINLFYT…AASPTPVKQG (126 aa)). Residues His124 and Tyr128 each coordinate heme.

The protein belongs to the CcmE/CycJ family.

The protein resides in the cell inner membrane. In terms of biological role, heme chaperone required for the biogenesis of c-type cytochromes. Transiently binds heme delivered by CcmC and transfers the heme to apo-cytochromes in a process facilitated by CcmF and CcmH. The sequence is that of Cytochrome c-type biogenesis protein CcmE from Pseudomonas syringae pv. syringae (strain B728a).